Reading from the N-terminus, the 96-residue chain is Co-chaperonin GroES (96 aa).

This sequence belongs to the GroES chaperonin family. As to quaternary structure, heptamer of 7 subunits arranged in a ring. Interacts with the chaperonin GroEL.

The protein resides in the cytoplasm. In terms of biological role, together with the chaperonin GroEL, plays an essential role in assisting protein folding. The GroEL-GroES system forms a nano-cage that allows encapsulation of the non-native substrate proteins and provides a physical environment optimized to promote and accelerate protein folding. GroES binds to the apical surface of the GroEL ring, thereby capping the opening of the GroEL channel. The sequence is that of Co-chaperonin GroES from Alteromonas mediterranea (strain DSM 17117 / CIP 110805 / LMG 28347 / Deep ecotype).